Consider the following 146-residue polypeptide: VHWSAEEKQLITGLWGKVNVADCGAEALARLLIVYPWTQRFFSSFGNLSSPTAILGNPMVRAHGKKVLTSFGDAVKNLDNIKNTFAQLSELHCDKLHVDPENFRLLGDILIIVLAAHFAKEFTPECQAAWQKLVRVVAHALARKYH.

The 145-residue stretch at 2–146 (HWSAEEKQLI…VAHALARKYH (145 aa)) folds into the Globin domain. Heme b is bound by residues His-63 and His-92.

It belongs to the globin family. As to quaternary structure, heterotetramer of two alpha chains and two beta chains. As to expression, red blood cells.

In terms of biological role, involved in oxygen transport from the lung to the various peripheral tissues. The chain is Hemoglobin subunit beta (HBB) from Anser anser anser (Western greylag goose).